The chain runs to 624 residues: Phragmoplastin DRP1E (624 aa).

T2 carries the N-acetylthreonine modification. A Dynamin-type G domain is found at 37–306; that stretch reads WEALPTVAVV…LESVIRTRIP (270 aa). The interval 47–54 is G1 motif; that stretch reads GGQSSGKS. Residue 50 to 55 participates in GTP binding; it reads SSGKSS. Positions 73–75 are G2 motif; sequence VTR. Positions 148–151 are G3 motif; it reads DLPG. A G4 motif region spans residues 217-220; it reads TKLD. GTP is bound by residues 218–223 and 248–251; these read KLDLMD and NRSQ. Residues 247–250 form a G5 motif region; it reads VNRS. Positions 532 to 624 constitute a GED domain; that stretch reads FRRIASNVSA…DEIDAVAWVR (93 aa).

Belongs to the TRAFAC class dynamin-like GTPase superfamily. Dynamin/Fzo/YdjA family. As to quaternary structure, forms homodimer and may homooligomerize and heterooligomerize to form the phragmoplastin complex. Binds to PHIP1. In terms of tissue distribution, ubiquitous.

Its subcellular location is the cytoplasm. The protein resides in the cytoskeleton. The protein localises to the phragmoplast. It carries out the reaction GTP + H2O = GDP + phosphate + H(+). Its function is as follows. Microtubule-associated force-producing protein that is targeted to the tubulo-vesicular network of the forming cell plate during cytokinesis. Also plays a major role in plasma membrane maintenance and cell wall integrity with an implication in vesicular trafficking, polar cell expansion, and other aspects of plant growth and development. Has a GTPase activity. This is Phragmoplastin DRP1E from Arabidopsis thaliana (Mouse-ear cress).